A 136-amino-acid chain; its full sequence is Large ribosomal subunit protein uL16c (136 aa).

The protein belongs to the universal ribosomal protein uL16 family. As to quaternary structure, part of the 50S ribosomal subunit.

It localises to the plastid. It is found in the chloroplast. In Guizotia abyssinica (Niger), this protein is Large ribosomal subunit protein uL16c.